Here is a 538-residue protein sequence, read N- to C-terminus: Sodium/hydrogen exchanger 1 (538 aa).

At M1–S19 the chain is on the cytoplasmic side. The chain crosses the membrane as a helical span at residues V20–L40. Over E41–W45 the chain is Vacuolar. The chain crosses the membrane as a helical span at residues M46–I66. Over S67–H73 the chain is Cytoplasmic. The segment at residues L74–A94 is an intramembrane region (helical). The Cytoplasmic segment spans residues G95–N106. The chain crosses the membrane as a helical span at residues F107 to L127. At G128–Y146 the chain is on the vacuolar side. 2 intramembrane regions (helical) span residues L147 to N166 and L172 to F192. The Vacuolar segment spans residues N193–L216. Residues Y217 to I237 form a helical membrane-spanning segment. Residues K238–Y262 are Cytoplasmic-facing. Residues M263–M283 traverse the membrane as a helical segment. The Vacuolar segment spans residues S284–T302. N-linked (GlcNAc...) asparagine glycosylation occurs at N290. Residues F303–L323 traverse the membrane as a helical segment. The Cytoplasmic segment spans residues D324 to S342. Residues S343–L363 traverse the membrane as a helical segment. Residues S364–N378 lie on the Vacuolar side of the membrane. An N-linked (GlcNAc...) asparagine glycan is attached at N370. A helical transmembrane segment spans residues M379–Y399. The Cytoplasmic segment spans residues N400–N413. A helical membrane pass occupies residues A414–L434. Over T435–A538 the chain is Vacuolar. N447 carries an N-linked (GlcNAc...) asparagine glycan. Positions R496–G518 are interaction with CML18/CAM15.

This sequence belongs to the monovalent cation:proton antiporter 1 (CPA1) transporter (TC 2.A.36) family. As to quaternary structure, calcium and pH-dependent interaction with CML18/CAM15 (increases when pH decreases, better at pH 5.5 than at pH 7.5). In terms of tissue distribution, ubiquitous, with higher levels around vascular tissues and guard cells.

Its subcellular location is the vacuole membrane. The protein resides in the endoplasmic reticulum membrane. The protein localises to the golgi apparatus membrane. The enzyme catalyses Na(+)(in) + H(+)(out) = Na(+)(out) + H(+)(in). It catalyses the reaction K(+)(in) + H(+)(out) = K(+)(out) + H(+)(in). In terms of biological role, acts in low affinity electroneutral exchange of protons for cations such as Na(+) or K(+) across membranes. Can also exchange Li(+) and Cs(+) with a lower affinity. Involved in vacuolar ion compartmentalization necessary for cell volume regulation and cytoplasmic Na(+) detoxification. Required during leaves expansion, probably to stimulate epidermal cell expansion. Confers competence to grow in high salinity conditions. The protein is Sodium/hydrogen exchanger 1 (NHX1) of Arabidopsis thaliana (Mouse-ear cress).